We begin with the raw amino-acid sequence, 835 residues long: Cell division control protein 48 (835 aa).

A disordered region spans residues 1-21 (MGEEHKPLLDASGVDPREEDK). Residue 257–263 (PGTGKTL) coordinates ATP. Residues Lys-305, Lys-322, and Lys-346 each participate in a glycyl lysine isopeptide (Lys-Gly) (interchain with G-Cter in ubiquitin) cross-link. Positions 358 and 394 each coordinate ATP. Phosphoserine occurs at positions 472 and 519. Lys-522 participates in a covalent cross-link: Glycyl lysine isopeptide (Lys-Gly) (interchain with G-Cter in ubiquitin). 531–536 (GTGKTL) lines the ATP pocket. Glycyl lysine isopeptide (Lys-Gly) (interchain with G-Cter in ubiquitin) cross-links involve residues Lys-539, Lys-594, and Lys-673. Basic and acidic residues predominate over residues 720–729 (EAEKEVKVEG). The tract at residues 720–746 (EAEKEVKVEGEDVEMTDEGAKAEQEPE) is disordered. The residue at position 735 (Thr-735) is a Phosphothreonine. Position 770 is a phosphoserine (Ser-770). Residues 792–835 (SNFNFNDAPLGTTATDNANSNNSAPSGAGAAFGSNAEEDDDLYS) are disordered. A compositionally biased stretch (low complexity) spans 802 to 826 (GTTATDNANSNNSAPSGAGAAFGSN).

It belongs to the AAA ATPase family. Component of the heterotrimeric CDC48-NPL4-UFD1 ATPase complex. The CDC48-NPL4-UFD1 ATPase complex interacts with the HRD1 ubiquitin ligase complex composed of the E3 ligase HRD1, its cofactors HRD3, USA1 and DER1, substrate recruiting factor YOS9 and CDC48-binding protein UBX2. Interaction between the complexes is mediated by interaction between CDC48-NPL4-UFD1 complex member CDC48 and HRD1 complex member UBX2. Forms a complex composed of CDC48, NPL4, UFD1, UFD2 and SHP1. Forms a complex composed of CDC48, NPL4, UFD1, DOA1, SHP1 and deubiquitinase OTU1; within the complex interacts with DOA1/UFD3 and OTU1 to prevent multiubiquitination of substrates. Interacts with UFD2, to add further ubiquitin moieties; the interaction with UFD2 is prevented by DOA1/UFD3. Forms a complex composed of CDC48, DOA1, deubiquitinase UBP3 and probably BRE5; within the complex interacts with DOA1 and UBP3. Interacts (via C-terminus) with DOA1 (via PUL domain); the interaction is direct. Interacts with NPL4. Interacts with SHP1/UBX1, UBX2, UBX3, UBX4, UBX5, UBX6 and UBX7. Interacts with VMS1; the interaction recruits CDC48 to the mitochondria in response to mitochondrial stress. Component of the ribosome quality control complex (RQC), composed of the E3 ubiquitin ligase RKR1/LTN1, RQC1 and RQC2, as well as CDC48 and its ubiquitin-binding cofactors. RQC forms a stable complex with 60S ribosomal subunits. Interacts with ASE1 and CDC5; the interaction is likely to result in their degradation. Component of the DSCc E3 ligase complexes composed of at least TUL1, DSC2, DSC3, UBX3, CDC48 as well as VLD1 for the vacuole-localized complex or GLD1 for the Golgi/endosome-localized complex.

It is found in the microsome. The protein localises to the endoplasmic reticulum. The protein resides in the cytoplasm. The catalysed reaction is ATP + H2O = ADP + phosphate + H(+). With respect to regulation, the first ATP-binding region has low ATPase activity. The second ATP-binding region is responsible for ATPase activity. ATP binding to the first ATP-binding region induces intrinsic activity of the second ATP-binding region. While ATP binding to the first ATP-binding region appears to prevent ATP hydrolysis by the second ATP-binding region, ADP-binding to first region promotes the coordinate and cooperative ATPase cycle of the second ATP-binding region. ATP binding to the first ATP-binding region induces a conformational change, promoting the rotation of the first ATP-binding region relative to the second ATP-binding region in the hexamer. ATP-dependent chaperone which probably uses the energy provided by ATP hydrolysis to generate mechanical force to unfold substrate proteins, disassemble protein complexes, and disaggregate protein aggregates. By recruiting and promoting the degradation of ubiquitinated proteins, plays a role in the ubiquitin fusion degradation (UFD) pathway. Has a role in the endoplasmic reticulum-associated degradation (ERAD) pathway which mediates the cytoplasmic elimination of misfolded proteins exported from the ER. Required for the proteasome-dependent processing/activation of MGA2 and SPT23 transcription factors leading to the subsequent expression of OLE1. Has an additional role in the turnover of OLE1 where it targets ubiquitinated OLE1 and other proteins to the ERAD. Regulates ubiquitin-mediated mitochondria protein degradation. Involved in spindle disassembly probably by promoting the degradation of spindle assembly factors ASE1 and CDC5 at the end of mitosis. Component of the ribosome quality control complex (RQC), a ribosome-associated complex that mediates ubiquitination and extraction of incompletely synthesized nascent chains for proteasomal degradation. CDC48 may provide the mechanical force that dislodges the polyubiquitinated nascent peptides from the exit channel. Required for ribophagy, a process which relocalizes ribosomal particles into the vacuole for degradation in response to starvation. Component of the DSC E3 ubiquitin ligase complexes that tag proteins present in Golgi, endosome and vacuole membranes and function in protein homeostasis under non-stress conditions and support a role in protein quality control. Substrate initially binds through the attached polyubiquitin chain to UDF1/NPL4 and then moves through the pore of the ATPase rings and is thereby unfolded. Acts on a broad range of even well-folded proteins via ubiquitin-binding and unfolding to initiate substrate processing. Involved in degradation of mislocalized tail-anchored transmembrane proteins extracted from the mitochondrion outer membrane by MSP1 and ubiquitinated by DOA10. The chain is Cell division control protein 48 from Saccharomyces cerevisiae (strain ATCC 204508 / S288c) (Baker's yeast).